Reading from the N-terminus, the 447-residue chain is N-succinylarginine dihydrolase (447 aa).

Residues 19–28, Asn110, and 137–138 each bind substrate; these read AGLSFGNEAS and HR. Residue Glu174 is part of the active site. Arg212 provides a ligand contact to substrate. The active site involves His248. Substrate is bound by residues Asp250 and Asn359. The active-site Nucleophile is Cys365.

This sequence belongs to the succinylarginine dihydrolase family. As to quaternary structure, homodimer.

It catalyses the reaction N(2)-succinyl-L-arginine + 2 H2O + 2 H(+) = N(2)-succinyl-L-ornithine + 2 NH4(+) + CO2. It participates in amino-acid degradation; L-arginine degradation via AST pathway; L-glutamate and succinate from L-arginine: step 2/5. Catalyzes the hydrolysis of N(2)-succinylarginine into N(2)-succinylornithine, ammonia and CO(2). The sequence is that of N-succinylarginine dihydrolase from Escherichia coli (strain K12 / MC4100 / BW2952).